A 438-amino-acid polypeptide reads, in one-letter code: UPF0229 protein Smed_1028 (438 aa).

The disordered stretch occupies residues 55 to 107 (PARGVNEPAFQPDSNSGERRHVLPGNREFAAGDRIPKRGGGGGAGNAGAGTGQ). A compositionally biased stretch (gly residues) spans 92-105 (RGGGGGAGNAGAGT).

It belongs to the UPF0229 family.

The chain is UPF0229 protein Smed_1028 from Sinorhizobium medicae (strain WSM419) (Ensifer medicae).